The following is a 197-amino-acid chain: Fucoxanthin-chlorophyll a-c binding protein F, chloroplastic (197 aa).

A chloroplast-targeting transit peptide spans 1–31; that stretch reads MKFAVFASLLASAAAFAPAQQSARTSVATNM. The next 3 helical transmembrane spans lie at 73 to 94, 114 to 134, and 174 to 196; these read ISML…PGDI, ISTA…IAVM, and GRAA…SLIP.

Belongs to the fucoxanthin chlorophyll protein family. In terms of assembly, the LHC complex of chromophytic algae is composed of fucoxanthin, chlorophyll A and C bound non-covalently by fucoxanthin chlorophyll proteins (FCPs). The ratio of the pigments in lhc; fucoxanthin: chlorophyll C: chlorophyll A is (0.6-1): (0.1-0.3): (1).

The protein resides in the plastid. It is found in the chloroplast thylakoid membrane. Functionally, the light-harvesting complex (LHC) functions as a light receptor, it captures and delivers excitation energy to photosystems with which it is closely associated. In chromophytic algae, LHC is associated with photosystem II, energy being transferred from fucoxanthin and chlorophyll C to chlorophyll A and the photosynthetic reaction centers where it is used to synthesize ATP and reducing power. The sequence is that of Fucoxanthin-chlorophyll a-c binding protein F, chloroplastic (FCPF) from Phaeodactylum tricornutum (Diatom).